The primary structure comprises 436 residues: Adenylosuccinate synthetase (436 aa).

Residues 12–18 and 40–42 contribute to the GTP site; these read GDEGKGK and GHT. Asp13 acts as the Proton acceptor in catalysis. Mg(2+) is bound by residues Asp13 and Gly40. IMP is bound by residues 13–16, 38–41, Thr128, Arg142, Gln223, Thr238, and Arg302; these read DEGK and NAGH. Residue His41 is the Proton donor of the active site. Residue 298–304 participates in substrate binding; that stretch reads TTTGRRR. Residues Arg304, 330 to 332, and 412 to 414 each bind GTP; these read KLD and SLG.

It belongs to the adenylosuccinate synthetase family. Homodimer. It depends on Mg(2+) as a cofactor.

Its subcellular location is the cytoplasm. The catalysed reaction is IMP + L-aspartate + GTP = N(6)-(1,2-dicarboxyethyl)-AMP + GDP + phosphate + 2 H(+). Its pathway is purine metabolism; AMP biosynthesis via de novo pathway; AMP from IMP: step 1/2. Functionally, plays an important role in the de novo pathway of purine nucleotide biosynthesis. Catalyzes the first committed step in the biosynthesis of AMP from IMP. In Prochlorococcus marinus (strain MIT 9515), this protein is Adenylosuccinate synthetase.